Here is a 150-residue protein sequence, read N- to C-terminus: Calmodulin (150 aa).

EF-hand domains follow at residues Glu-9–Ser-44, Pro-45–Asp-80, Asp-82–Arg-117, and Leu-118–Lys-150. Positions 22, 24, 26, 28, 33, 58, 60, 62, 64, 69, 95, 97, 99, 101, 106, 131, 133, 135, and 142 each coordinate Ca(2+).

Belongs to the calmodulin family. Interacts with rng2.

Its subcellular location is the cytoplasm. The protein resides in the cytoskeleton. It localises to the microtubule organizing center. It is found in the spindle pole body. Calmodulin mediates the control of a large number of enzymes, ion channels and other proteins by Ca(2+). Among the enzymes to be stimulated by the calmodulin-Ca(2+) complex are a number of protein kinases and phosphatases. This is Calmodulin (cam1) from Schizosaccharomyces pombe (strain 972 / ATCC 24843) (Fission yeast).